The following is a 347-amino-acid chain: Dual-specificity RNA methyltransferase RlmN (347 aa).

Residue Glu93 is the Proton acceptor of the active site. A Radical SAM core domain is found at 99–327 (DEGRNTLCIS…VITRDSRGSD (229 aa)). Cys106 and Cys332 form a disulfide bridge. [4Fe-4S] cluster-binding residues include Cys113, Cys117, and Cys120. S-adenosyl-L-methionine-binding positions include 158–159 (GE), Ser190, 213–215 (SLN), and Asn289. Catalysis depends on Cys332, which acts as the S-methylcysteine intermediate.

This sequence belongs to the radical SAM superfamily. RlmN family. [4Fe-4S] cluster is required as a cofactor.

Its subcellular location is the cytoplasm. It carries out the reaction adenosine(2503) in 23S rRNA + 2 reduced [2Fe-2S]-[ferredoxin] + 2 S-adenosyl-L-methionine = 2-methyladenosine(2503) in 23S rRNA + 5'-deoxyadenosine + L-methionine + 2 oxidized [2Fe-2S]-[ferredoxin] + S-adenosyl-L-homocysteine. It catalyses the reaction adenosine(37) in tRNA + 2 reduced [2Fe-2S]-[ferredoxin] + 2 S-adenosyl-L-methionine = 2-methyladenosine(37) in tRNA + 5'-deoxyadenosine + L-methionine + 2 oxidized [2Fe-2S]-[ferredoxin] + S-adenosyl-L-homocysteine. In terms of biological role, specifically methylates position 2 of adenine 2503 in 23S rRNA and position 2 of adenine 37 in tRNAs. m2A2503 modification seems to play a crucial role in the proofreading step occurring at the peptidyl transferase center and thus would serve to optimize ribosomal fidelity. This Pelobacter propionicus (strain DSM 2379 / NBRC 103807 / OttBd1) protein is Dual-specificity RNA methyltransferase RlmN.